Here is a 244-residue protein sequence, read N- to C-terminus: Eukaryotic translation initiation factor 6 (244 aa).

Residues Ser174 and Ser175 each carry the phosphoserine; by CK1 modification.

Belongs to the eIF-6 family. In terms of assembly, monomer. Associates with the 60S ribosomal subunit. Phosphorylation at Ser-174 and Ser-175 promotes nuclear export.

It localises to the cytoplasm. Its subcellular location is the nucleus. The protein resides in the nucleolus. Functionally, binds to the 60S ribosomal subunit and prevents its association with the 40S ribosomal subunit to form the 80S initiation complex in the cytoplasm. Is also involved in ribosome biogenesis. Associates with pre-60S subunits in the nucleus and is involved in its nuclear export. The sequence is that of Eukaryotic translation initiation factor 6 (tif6) from Schizosaccharomyces pombe (strain 972 / ATCC 24843) (Fission yeast).